We begin with the raw amino-acid sequence, 261 residues long: Indole-3-glycerol phosphate synthase (261 aa).

This sequence belongs to the TrpC family.

It carries out the reaction 1-(2-carboxyphenylamino)-1-deoxy-D-ribulose 5-phosphate + H(+) = (1S,2R)-1-C-(indol-3-yl)glycerol 3-phosphate + CO2 + H2O. It functions in the pathway amino-acid biosynthesis; L-tryptophan biosynthesis; L-tryptophan from chorismate: step 4/5. The chain is Indole-3-glycerol phosphate synthase from Burkholderia lata (strain ATCC 17760 / DSM 23089 / LMG 22485 / NCIMB 9086 / R18194 / 383).